Consider the following 547-residue polypeptide: Chaperonin GroEL (547 aa).

ATP is bound by residues Thr30–Pro33, Lys51, Asp87–Thr91, Gly415, Asn479–Ala481, and Asp495.

It belongs to the chaperonin (HSP60) family. As to quaternary structure, forms a cylinder of 14 subunits composed of two heptameric rings stacked back-to-back. Interacts with the co-chaperonin GroES.

The protein resides in the cytoplasm. It carries out the reaction ATP + H2O + a folded polypeptide = ADP + phosphate + an unfolded polypeptide.. Its function is as follows. Together with its co-chaperonin GroES, plays an essential role in assisting protein folding. The GroEL-GroES system forms a nano-cage that allows encapsulation of the non-native substrate proteins and provides a physical environment optimized to promote and accelerate protein folding. The sequence is that of Chaperonin GroEL from Cupriavidus metallidurans (strain ATCC 43123 / DSM 2839 / NBRC 102507 / CH34) (Ralstonia metallidurans).